The primary structure comprises 147 residues: DNA polymerase epsilon subunit 3 (147 aa).

At alanine 2 the chain carries N-acetylalanine. Threonine 83 bears the Phosphothreonine mark. Positions leucine 85–aspartate 146 form a coiled coil. Basic and acidic residues predominate over residues arginine 93–aspartate 124. The tract at residues arginine 93–asparagine 147 is disordered. At serine 122 the chain carries Phosphoserine. Residues glutamate 125 to asparagine 147 are compositionally biased toward acidic residues.

In terms of assembly, component of the DNA polymerase epsilon complex consisting of four subunits: the catalytic subunit POLE and the accessory subunits POLE2, POLE3 and POLE4. Interaction with POLE4 is a prerequisite for further binding with POLE and POLE2. Heterodimer with CHRAC1; binds to DNA. Component of the CHRAC ISWI chromatin remodeling complex at least composed of SMARCA5/SNF2H, BAZ1A/ACF1, CHRAC1 and POLE3; the complex preferentially binds DNA through the CHRAC1-POLE3 heterodimer and possesses ATP-dependent nucleosome-remodeling activity. Within the complex, the heterodimer with CHRAC1 interacts with SMARCA5/SNF2H; the interaction is direct and enhances nucleosome sliding activity by the SMARCA5/SNF2H and BAZ1A/ACF1 interaction. Within the complex, the heterodimer with CHRAC1 interacts with BAZ1A/ACF1; the interactions are direct.

The protein localises to the nucleus. In terms of biological role, accessory component of the DNA polymerase epsilon complex. Participates in DNA repair and in chromosomal DNA replication. Forms a complex with CHRAC1 and binds naked DNA, which is then incorporated into chromatin, aided by the nucleosome-remodeling activity of ISWI/SNF2H and ACF1. Does not enhance nucleosome sliding activity of the ACF-5 ISWI chromatin remodeling complex. The polypeptide is DNA polymerase epsilon subunit 3 (POLE3) (Bos taurus (Bovine)).